We begin with the raw amino-acid sequence, 698 residues long: Glycine--tRNA ligase beta subunit (698 aa).

Belongs to the class-II aminoacyl-tRNA synthetase family. Tetramer of two alpha and two beta subunits.

Its subcellular location is the cytoplasm. The enzyme catalyses tRNA(Gly) + glycine + ATP = glycyl-tRNA(Gly) + AMP + diphosphate. This is Glycine--tRNA ligase beta subunit from Xanthomonas campestris pv. campestris (strain 8004).